A 205-amino-acid polypeptide reads, in one-letter code: Adenylyl-sulfate kinase (205 aa).

31 to 38 (GLSGAGKS) lines the ATP pocket. Ser-105 functions as the Phosphoserine intermediate in the catalytic mechanism.

The protein belongs to the APS kinase family.

It carries out the reaction adenosine 5'-phosphosulfate + ATP = 3'-phosphoadenylyl sulfate + ADP + H(+). Its pathway is sulfur metabolism; hydrogen sulfide biosynthesis; sulfite from sulfate: step 2/3. In terms of biological role, catalyzes the synthesis of activated sulfate. The polypeptide is Adenylyl-sulfate kinase (Shewanella baltica (strain OS223)).